A 305-amino-acid polypeptide reads, in one-letter code: tRNA dimethylallyltransferase (305 aa).

An ATP-binding site is contributed by 8-15 (GPTAVGKT). Residue 10 to 15 (TAVGKT) coordinates substrate. The interaction with substrate tRNA stretch occupies residues 33–36 (DSRQ).

Belongs to the IPP transferase family. Monomer. It depends on Mg(2+) as a cofactor.

It catalyses the reaction adenosine(37) in tRNA + dimethylallyl diphosphate = N(6)-dimethylallyladenosine(37) in tRNA + diphosphate. Functionally, catalyzes the transfer of a dimethylallyl group onto the adenine at position 37 in tRNAs that read codons beginning with uridine, leading to the formation of N6-(dimethylallyl)adenosine (i(6)A). This is tRNA dimethylallyltransferase from Thermotoga maritima (strain ATCC 43589 / DSM 3109 / JCM 10099 / NBRC 100826 / MSB8).